The sequence spans 215 residues: 3,4-dihydroxy-2-butanone 4-phosphate synthase (215 aa).

Residues 38-39 (RE), aspartate 43, 151-155 (RRGHT), and glutamate 175 contribute to the D-ribulose 5-phosphate site. Glutamate 39 serves as a coordination point for Mg(2+). Mg(2+) is bound at residue histidine 154.

Belongs to the DHBP synthase family. Homodimer. It depends on Mg(2+) as a cofactor. The cofactor is Mn(2+).

It carries out the reaction D-ribulose 5-phosphate = (2S)-2-hydroxy-3-oxobutyl phosphate + formate + H(+). Its pathway is cofactor biosynthesis; riboflavin biosynthesis; 2-hydroxy-3-oxobutyl phosphate from D-ribulose 5-phosphate: step 1/1. In terms of biological role, catalyzes the conversion of D-ribulose 5-phosphate to formate and 3,4-dihydroxy-2-butanone 4-phosphate. This chain is 3,4-dihydroxy-2-butanone 4-phosphate synthase, found in Haemophilus influenzae (strain ATCC 51907 / DSM 11121 / KW20 / Rd).